The chain runs to 55 residues: Large ribosomal subunit protein bL33 (55 aa).

It belongs to the bacterial ribosomal protein bL33 family.

The polypeptide is Large ribosomal subunit protein bL33 (Novosphingobium aromaticivorans (strain ATCC 700278 / DSM 12444 / CCUG 56034 / CIP 105152 / NBRC 16084 / F199)).